A 362-amino-acid polypeptide reads, in one-letter code: 4-hydroxythreonine-4-phosphate dehydrogenase (362 aa).

T149 provides a ligand contact to substrate. A divalent metal cation contacts are provided by H184, H229, and H295. The substrate site is built by K303, N312, and R321.

Belongs to the PdxA family. Homodimer. The cofactor is a divalent metal cation.

It localises to the cytoplasm. The enzyme catalyses 4-(phosphooxy)-L-threonine + NAD(+) = 3-amino-2-oxopropyl phosphate + CO2 + NADH. The protein operates within cofactor biosynthesis; pyridoxine 5'-phosphate biosynthesis; pyridoxine 5'-phosphate from D-erythrose 4-phosphate: step 4/5. Catalyzes the NAD(P)-dependent oxidation of 4-(phosphooxy)-L-threonine (HTP) into 2-amino-3-oxo-4-(phosphooxy)butyric acid which spontaneously decarboxylates to form 3-amino-2-oxopropyl phosphate (AHAP). The sequence is that of 4-hydroxythreonine-4-phosphate dehydrogenase from Nostoc sp. (strain PCC 7120 / SAG 25.82 / UTEX 2576).